Reading from the N-terminus, the 642-residue chain is Mini-chromosome maintenance complex-binding protein (642 aa).

Over residues 151–161 (ARVSPSTSYTP) the composition is skewed to polar residues. Positions 151-196 (ARVSPSTSYTPSRHKRSYEDDEDMDLQPSKQKEQHPGSRQAGGLGG) are disordered. Serine 154 carries the phosphoserine modification. A Phosphothreonine modification is found at threonine 160. 2 positions are modified to phosphoserine: serine 167 and serine 298.

The protein belongs to the MCMBP family. As to quaternary structure, interacts with the MCM complex: associates with the MCM3-7 complex which lacks MCM2, while it does not interact with the MCM complex when MCM2 is present (MCM2-7 complex). Interacts with the RPA complex, when composed of all RPA1, RPA2 and RPA3 components, but not with RPA1 or RPA2 alone.

It is found in the nucleus. Functionally, associated component of the MCM complex that acts as a regulator of DNA replication. Binds to the MCM complex during late S phase and promotes the disassembly of the MCM complex from chromatin, thereby acting as a key regulator of pre-replication complex (pre-RC) unloading from replicated DNA. Can dissociate the MCM complex without addition of ATP; probably acts by destabilizing interactions of each individual subunits of the MCM complex. Required for sister chromatid cohesion. This Mus musculus (Mouse) protein is Mini-chromosome maintenance complex-binding protein (Mcmbp).